A 352-amino-acid chain; its full sequence is tRNA N6-adenosine threonylcarbamoyltransferase (352 aa).

The a divalent metal cation site is built by H114, H118, and Y135. Substrate-binding positions include 135-139 (YVSGG), D167, G182, E186, and N283. A divalent metal cation is bound at residue D311.

It belongs to the KAE1 / TsaD family. In terms of assembly, component of the EKC/KEOPS complex composed of at least BUD32, CGI121, GON7, KAE1 and PCC1; the whole complex dimerizes. The cofactor is a divalent metal cation.

Its subcellular location is the cytoplasm. It localises to the nucleus. The enzyme catalyses L-threonylcarbamoyladenylate + adenosine(37) in tRNA = N(6)-L-threonylcarbamoyladenosine(37) in tRNA + AMP + H(+). In terms of biological role, component of the EKC/KEOPS complex that is required for the formation of a threonylcarbamoyl group on adenosine at position 37 (t(6)A37) in tRNAs that read codons beginning with adenine. The complex is probably involved in the transfer of the threonylcarbamoyl moiety of threonylcarbamoyl-AMP (TC-AMP) to the N6 group of A37. KAE1 likely plays a direct catalytic role in this reaction, but requires other protein(s) of the complex to fulfill this activity. The EKC/KEOPS complex also promotes both telomere uncapping and telomere elongation. The complex is required for efficient recruitment of transcriptional coactivators. The polypeptide is tRNA N6-adenosine threonylcarbamoyltransferase (Phaeosphaeria nodorum (strain SN15 / ATCC MYA-4574 / FGSC 10173) (Glume blotch fungus)).